Consider the following 268-residue polypeptide: Formamidopyrimidine-DNA glycosylase (268 aa).

Proline 2 functions as the Schiff-base intermediate with DNA in the catalytic mechanism. Glutamate 3 acts as the Proton donor in catalysis. The active-site Proton donor; for beta-elimination activity is the lysine 56. Residues histidine 91, arginine 110, and arginine 149 each coordinate DNA. The FPG-type zinc finger occupies 234-268 (QVYGRFNQACPNCGQPLKRSRIGGRSSHYCEKCQQ). Arginine 258 functions as the Proton donor; for delta-elimination activity in the catalytic mechanism.

It belongs to the FPG family. Monomer. The cofactor is Zn(2+).

It carries out the reaction Hydrolysis of DNA containing ring-opened 7-methylguanine residues, releasing 2,6-diamino-4-hydroxy-5-(N-methyl)formamidopyrimidine.. The catalysed reaction is 2'-deoxyribonucleotide-(2'-deoxyribose 5'-phosphate)-2'-deoxyribonucleotide-DNA = a 3'-end 2'-deoxyribonucleotide-(2,3-dehydro-2,3-deoxyribose 5'-phosphate)-DNA + a 5'-end 5'-phospho-2'-deoxyribonucleoside-DNA + H(+). Involved in base excision repair of DNA damaged by oxidation or by mutagenic agents. Acts as a DNA glycosylase that recognizes and removes damaged bases. Has a preference for oxidized purines, such as 7,8-dihydro-8-oxoguanine (8-oxoG). Has AP (apurinic/apyrimidinic) lyase activity and introduces nicks in the DNA strand. Cleaves the DNA backbone by beta-delta elimination to generate a single-strand break at the site of the removed base with both 3'- and 5'-phosphates. The protein is Formamidopyrimidine-DNA glycosylase of Syntrophomonas wolfei subsp. wolfei (strain DSM 2245B / Goettingen).